Consider the following 308-residue polypeptide: Protoheme IX farnesyltransferase (308 aa).

8 helical membrane passes run 31–51, 53–73, 102–122, 124–144, 149–169, 170–190, 240–260, and 288–308; these read VIEL…RGTV, PLLI…ANAL, NALV…WWTT, LLSG…YTLL, TSQN…IGWS, AVTG…FFWT, LALA…VWFL, and YLAV…PHLF.

It belongs to the UbiA prenyltransferase family. Protoheme IX farnesyltransferase subfamily.

The protein localises to the cell membrane. It catalyses the reaction heme b + (2E,6E)-farnesyl diphosphate + H2O = Fe(II)-heme o + diphosphate. It participates in porphyrin-containing compound metabolism; heme O biosynthesis; heme O from protoheme: step 1/1. Functionally, converts heme B (protoheme IX) to heme O by substitution of the vinyl group on carbon 2 of heme B porphyrin ring with a hydroxyethyl farnesyl side group. The sequence is that of Protoheme IX farnesyltransferase from Mycolicibacterium paratuberculosis (strain ATCC BAA-968 / K-10) (Mycobacterium paratuberculosis).